A 209-amino-acid polypeptide reads, in one-letter code: Lectin (209 aa).

Homodimer; non-covalently linked.

Functionally, binds chito-oligosaccherides. Has hemagglutinating activity towards rabbit erythrocytes. The polypeptide is Lectin (Luffa acutangula (Ridged gourd)).